A 225-amino-acid chain; its full sequence is Riboflavin kinase (225 aa).

The unknown stretch occupies residues M1–I89. Residues L90 to K225 are riboflavin kinase. G99–Q104 contacts CDP. 2 residues coordinate Mg(2+): T128 and N130. 2 residues coordinate FMN: T185 and E193. I198 to R201 contacts CDP.

This sequence belongs to the archaeal riboflavin kinase family. Requires Mg(2+) as cofactor.

The catalysed reaction is riboflavin + CTP = CDP + FMN + H(+). Its pathway is cofactor biosynthesis; FMN biosynthesis; FMN from riboflavin (CTP route): step 1/1. In terms of biological role, catalyzes the CTP-dependent phosphorylation of riboflavin (vitamin B2) to form flavin mononucleotide (FMN). This chain is Riboflavin kinase (ribK), found in Methanosarcina barkeri (strain Fusaro / DSM 804).